The following is a 77-amino-acid chain: Cysteine-rich protein 1 (77 aa).

Residues 2 to 63 enclose the LIM zinc-binding domain; the sequence is PKCPKCSKEV…HPCYAAMFGP (62 aa). N6-acetyllysine is present on residues lysine 9 and lysine 22. Arginine 68 carries the post-translational modification Omega-N-methylarginine.

Functionally, seems to have a role in zinc absorption and may function as an intracellular zinc transport protein. This Bos taurus (Bovine) protein is Cysteine-rich protein 1 (CRIP1).